Here is a 326-residue protein sequence, read N- to C-terminus: Transposase InsH for insertion sequence element IS5Y (326 aa).

This sequence belongs to the transposase 11 family.

In terms of biological role, involved in the transposition of the insertion sequence IS5. The protein is Transposase InsH for insertion sequence element IS5Y (insH5) of Escherichia coli (strain K12).